A 400-amino-acid polypeptide reads, in one-letter code: tRNA-specific adenosine deaminase TAD3 (400 aa).

Residues serine 250–phenylalanine 385 enclose the CMP/dCMP-type deaminase domain. Histidine 257 contributes to the Zn(2+) binding site. The segment at leucine 273–serine 320 is disordered. Residues asparagine 309–serine 320 are compositionally biased toward basic and acidic residues. Residues cysteine 339 and cysteine 342 each coordinate Zn(2+).

Belongs to the cytidine and deoxycytidylate deaminase family. ADAT3 subfamily. In terms of assembly, interacts with TAD2.

It is found in the nucleus. Its subcellular location is the cytoplasm. It carries out the reaction adenosine(34) in tRNA + H2O + H(+) = inosine(34) in tRNA + NH4(+). In terms of biological role, involved in RNA editing. Catalyzes the specific deamination of adenosine-34 in several cytosolic tRNA species. Generates inosine at the wobble position of the anticodon loop. The chain is tRNA-specific adenosine deaminase TAD3 from Arabidopsis thaliana (Mouse-ear cress).